Here is a 372-residue protein sequence, read N- to C-terminus: MSNKDIRVVVGMSGGVDSSVTAHVLKEQGYDVIGIFMKNWDDTDENGVCTATEDYNDVIEVCNQIGIPYYAVNFEKEYWDKVFTYFLDEYKKGRTPNPDVMCNKEIKFKAFLDHAMNLGADYVATGHYARIHRHEDGHVEMLRGVDNNKDQTYFLNQLSQQQLSKVMFPIGDIEKSEVRRIAEEQGLVTAKKKDSTGICFIGEKNFKTFLSQYLPAQPGDMITLDGKKMGKHSGLMYYTIGQRHGLGIGGDGDPWFVVGKNLKDNVLYVEQGFHHDALYSDYLIASDYSFVNPEDNDLDQGFECTAKFRYRQKDTKVFVKRENDHALRVTFAEPVRAITPGQAVVFYQGDVCLGGATIDDVFKNEGQLNYVV.

ATP-binding positions include 11 to 18 and M37; that span reads GMSGGVDS. The segment at 97 to 99 is interaction with target base in tRNA; the sequence is NPD. C102 serves as the catalytic Nucleophile. C102 and C199 are disulfide-bonded. An ATP-binding site is contributed by G126. The interaction with tRNA stretch occupies residues 149–151; it reads KDQ. C199 functions as the Cysteine persulfide intermediate in the catalytic mechanism. The interval 309 to 310 is interaction with tRNA; sequence RY.

It belongs to the MnmA/TRMU family.

The protein resides in the cytoplasm. The enzyme catalyses S-sulfanyl-L-cysteinyl-[protein] + uridine(34) in tRNA + AH2 + ATP = 2-thiouridine(34) in tRNA + L-cysteinyl-[protein] + A + AMP + diphosphate + H(+). In terms of biological role, catalyzes the 2-thiolation of uridine at the wobble position (U34) of tRNA, leading to the formation of s(2)U34. This Staphylococcus aureus (strain USA300) protein is tRNA-specific 2-thiouridylase MnmA.